The chain runs to 339 residues: Phosphate acyltransferase (339 aa).

This sequence belongs to the PlsX family. In terms of assembly, homodimer. Probably interacts with PlsY.

It localises to the cytoplasm. The enzyme catalyses a fatty acyl-[ACP] + phosphate = an acyl phosphate + holo-[ACP]. The protein operates within lipid metabolism; phospholipid metabolism. In terms of biological role, catalyzes the reversible formation of acyl-phosphate (acyl-PO(4)) from acyl-[acyl-carrier-protein] (acyl-ACP). This enzyme utilizes acyl-ACP as fatty acyl donor, but not acyl-CoA. The sequence is that of Phosphate acyltransferase from Methylococcus capsulatus (strain ATCC 33009 / NCIMB 11132 / Bath).